A 396-amino-acid polypeptide reads, in one-letter code: Ribosomal RNA large subunit methyltransferase I (396 aa).

A PUA domain is found at 2–81 (SVRLVLAKGR…ESIDIAFFSR (80 aa)).

The protein belongs to the methyltransferase superfamily. RlmI family.

Its subcellular location is the cytoplasm. The catalysed reaction is cytidine(1962) in 23S rRNA + S-adenosyl-L-methionine = 5-methylcytidine(1962) in 23S rRNA + S-adenosyl-L-homocysteine + H(+). In terms of biological role, specifically methylates the cytosine at position 1962 (m5C1962) of 23S rRNA. This Shigella boydii serotype 4 (strain Sb227) protein is Ribosomal RNA large subunit methyltransferase I.